Consider the following 229-residue polypeptide: 7-cyano-7-deazaguanine synthase (229 aa).

15 to 25 (LSGGLDSATVV) is a binding site for ATP. Zn(2+) contacts are provided by C194, C204, C207, and C210.

This sequence belongs to the QueC family. Zn(2+) serves as cofactor.

The catalysed reaction is 7-carboxy-7-deazaguanine + NH4(+) + ATP = 7-cyano-7-deazaguanine + ADP + phosphate + H2O + H(+). It functions in the pathway purine metabolism; 7-cyano-7-deazaguanine biosynthesis. Its function is as follows. Catalyzes the ATP-dependent conversion of 7-carboxy-7-deazaguanine (CDG) to 7-cyano-7-deazaguanine (preQ(0)). This is 7-cyano-7-deazaguanine synthase from Pseudomonas savastanoi pv. phaseolicola (strain 1448A / Race 6) (Pseudomonas syringae pv. phaseolicola (strain 1448A / Race 6)).